A 351-amino-acid polypeptide reads, in one-letter code: Signal recognition particle receptor FtsY (351 aa).

GTP contacts are provided by residues 156–163, 238–242, and 302–305; these read GINGTGKT, DTAGR, and TKLD.

This sequence belongs to the GTP-binding SRP family. FtsY subfamily. In terms of assembly, part of the signal recognition particle protein translocation system, which is composed of SRP and FtsY. SRP is a ribonucleoprotein composed of Ffh and a 4.5S RNA molecule.

Its subcellular location is the cell membrane. It localises to the cytoplasm. The enzyme catalyses GTP + H2O = GDP + phosphate + H(+). Its function is as follows. Involved in targeting and insertion of nascent membrane proteins into the cytoplasmic membrane. Acts as a receptor for the complex formed by the signal recognition particle (SRP) and the ribosome-nascent chain (RNC). Interaction with SRP-RNC leads to the transfer of the RNC complex to the Sec translocase for insertion into the membrane, the hydrolysis of GTP by both Ffh and FtsY, and the dissociation of the SRP-FtsY complex into the individual components. This Buchnera aphidicola subsp. Schizaphis graminum (strain Sg) protein is Signal recognition particle receptor FtsY.